We begin with the raw amino-acid sequence, 232 residues long: Ubiquinone biosynthesis O-methyltransferase (232 aa).

4 residues coordinate S-adenosyl-L-methionine: Arg-36, Gly-55, Asp-76, and Leu-120.

Belongs to the methyltransferase superfamily. UbiG/COQ3 family.

The catalysed reaction is a 3-demethylubiquinol + S-adenosyl-L-methionine = a ubiquinol + S-adenosyl-L-homocysteine + H(+). It carries out the reaction a 3-(all-trans-polyprenyl)benzene-1,2-diol + S-adenosyl-L-methionine = a 2-methoxy-6-(all-trans-polyprenyl)phenol + S-adenosyl-L-homocysteine + H(+). It participates in cofactor biosynthesis; ubiquinone biosynthesis. In terms of biological role, O-methyltransferase that catalyzes the 2 O-methylation steps in the ubiquinone biosynthetic pathway. This Pseudomonas entomophila (strain L48) protein is Ubiquinone biosynthesis O-methyltransferase.